The following is a 255-amino-acid chain: Ciliogenesis and planar polarity effector 2 (255 aa).

Residues Pro52 to Asp255 are small GTPase-like. GTP contacts are provided by residues Gly64 to Thr71 and Thr177 to Asp180.

It belongs to the small GTPase superfamily. Rab family.

Its subcellular location is the cytoplasm. It localises to the cytoskeleton. It is found in the cilium basal body. Functionally, potential effector of the planar cell polarity signaling pathway. Plays a role in targeted membrane trafficking most probably at the level of vesicle fusion with membranes. Involved in cilium biogenesis by regulating the transport of cargo proteins to the basal body and to the apical tips of cilia. More generally involved in exocytosis in secretory cells. This chain is Ciliogenesis and planar polarity effector 2 (cplane2), found in Xenopus tropicalis (Western clawed frog).